Reading from the N-terminus, the 215-residue chain is Cytochrome b6 (215 aa).

Residues 32 to 52 form a helical membrane-spanning segment; it reads IFYCLGGITLTCFLVQVATGF. Cys35 is a binding site for heme c. 2 residues coordinate heme b: His86 and His100. The next 3 helical transmembrane spans lie at 90–110, 116–136, and 186–206; these read ASMM…TGGF, LTWV…VTGY, and LHTF…FPMI. Residues His187 and His202 each coordinate heme b.

The protein belongs to the cytochrome b family. PetB subfamily. In terms of assembly, the 4 large subunits of the cytochrome b6-f complex are cytochrome b6, subunit IV (17 kDa polypeptide, PetD), cytochrome f and the Rieske protein, while the 4 small subunits are PetG, PetL, PetM and PetN. The complex functions as a dimer. It depends on heme b as a cofactor. The cofactor is heme c.

It is found in the plastid. It localises to the chloroplast thylakoid membrane. Component of the cytochrome b6-f complex, which mediates electron transfer between photosystem II (PSII) and photosystem I (PSI), cyclic electron flow around PSI, and state transitions. The chain is Cytochrome b6 from Solanum bulbocastanum (Wild potato).